A 2042-amino-acid chain; its full sequence is Cell adhesion molecule DSCAML1 (2042 aa).

The signal sequence occupies residues 1–17 (MWLVTFFLLYSLRKAHT). Residues 18–1592 (EDVGTSLYFV…AQGEGDDVKK (1575 aa)) are Extracellular-facing. N-linked (GlcNAc...) asparagine glycosylation is found at asparagine 28 and asparagine 78. Ig-like C2-type domains lie at 37–107 (SSTV…AENS), 114–216 (PNIR…ARLS), 227–311 (PTML…GTLT), 315–403 (PLRV…SIIT), 409–502 (PRIV…ARIN), 507–587 (PSIR…LSIS), 597–686 (PPLI…RQLI), 691–785 (PRFV…MFLT), and 789–886 (PAMI…LTVQ). Disulfide bonds link cysteine 46/cysteine 102, cysteine 145/cysteine 197, cysteine 248/cysteine 295, cysteine 337/cysteine 387, and cysteine 430/cysteine 486. N-linked (GlcNAc...) asparagine glycans are attached at residues asparagine 369, asparagine 472, asparagine 514, asparagine 557, asparagine 667, asparagine 711, asparagine 750, asparagine 797, and asparagine 810. 2 disulfide bridges follow: cysteine 527–cysteine 576 and cysteine 618–cysteine 670. Cysteine 712 and cysteine 768 are oxidised to a cystine. Cysteines 811 and 868 form a disulfide. Fibronectin type-III domains follow at residues 888 to 985 (PPDP…TEEA), 990 to 1089 (PPMD…TLED), 1094 to 1190 (PPEN…TKED), and 1194 to 1289 (PPAG…AGKA). Asparagine 927, asparagine 1083, asparagine 1145, asparagine 1163, asparagine 1276, and asparagine 1346 each carry an N-linked (GlcNAc...) asparagine glycan. Residues 1279 to 1368 (EKVTIEPAGK…SGYYTCTATN (90 aa)) enclose the Ig-like C2-type 10 domain. Cysteine 1312 and cysteine 1364 are oxidised to a cystine. 2 consecutive Fibronectin type-III domains span residues 1384–1478 (PPDQ…THGR) and 1479–1579 (EPSF…TIPP). N-linked (GlcNAc...) asparagine glycosylation is found at asparagine 1493, asparagine 1532, and asparagine 1562. A helical transmembrane segment spans residues 1593 to 1613 (LFTIACPIILATLGVALLFII). The Cytoplasmic portion of the chain corresponds to 1614 to 2042 (RKKRKEKRLK…GAYSKSYTLV (429 aa)). 4 disordered regions span residues 1716–1742 (PLID…HSTR), 1781–1805 (SDSY…TESA), 1841–1865 (SSDQ…PSEP), and 1940–2042 (PPAR…YTLV). The span at 1733-1742 (KSVKSAHSTR) shows a compositional bias: basic residues. 2 stretches are compositionally biased toward polar residues: residues 1781-1790 (SDSYSASLSQ) and 1841-1863 (SSDQ…STPS). The span at 1951 to 1960 (AKPPGLPPPS) shows a compositional bias: pro residues. Low complexity predominate over residues 1961 to 1983 (SSSSSTTLPQRTLPMPTAASTAP). Pro residues predominate over residues 1984–1995 (APAPAPAAPAEP). Composition is skewed to low complexity over residues 1996-2005 (PANTTTTTTT) and 2023-2034 (GAGRAQKQGAGA).

As to quaternary structure, homodimer; mediates homophilic interactions to promote cell adhesion. In terms of tissue distribution, SDK1, SDK2, DSCAM and DSCAML1 are expressed in non-overlapping subsets of interneurons and retinal ganglion cells (RGCs) that form synapses in distinct inner plexiform layer (IPL) sublaminae.

Its subcellular location is the cell membrane. It is found in the synapse. In terms of biological role, cell adhesion molecule that plays a role in neuronal self-avoidance. Promotes repulsion between specific neuronal processes of either the same cell or the same subtype of cells. Adhesion molecule that promotes lamina-specific synaptic connections in the retina: expressed in specific subsets of interneurons and retinal ganglion cells (RGCs) and promotes synaptic connectivity via homophilic interactions. This Gallus gallus (Chicken) protein is Cell adhesion molecule DSCAML1 (DSCAML1).